We begin with the raw amino-acid sequence, 669 residues long: DNA ligase (669 aa).

Residues 31-35 (DSVYD), 80-81 (SL), and Glu112 contribute to the NAD(+) site. Lys114 functions as the N6-AMP-lysine intermediate in the catalytic mechanism. NAD(+) contacts are provided by Arg135, Glu172, Lys289, and Lys313. Zn(2+)-binding residues include Cys407, Cys410, Cys425, and Cys430. The region spanning 591-669 (TDSGKLKGKT…EAEFLQLLEP (79 aa)) is the BRCT domain.

It belongs to the NAD-dependent DNA ligase family. LigA subfamily. Requires Mg(2+) as cofactor. Mn(2+) is required as a cofactor.

It carries out the reaction NAD(+) + (deoxyribonucleotide)n-3'-hydroxyl + 5'-phospho-(deoxyribonucleotide)m = (deoxyribonucleotide)n+m + AMP + beta-nicotinamide D-nucleotide.. Functionally, DNA ligase that catalyzes the formation of phosphodiester linkages between 5'-phosphoryl and 3'-hydroxyl groups in double-stranded DNA using NAD as a coenzyme and as the energy source for the reaction. It is essential for DNA replication and repair of damaged DNA. In Synechocystis sp. (strain ATCC 27184 / PCC 6803 / Kazusa), this protein is DNA ligase.